Here is a 275-residue protein sequence, read N- to C-terminus: MRISPSETAMKLSLSPPPYADAPVVVLISGLGGSGSYWLPQLAVLDQEYQVVCYDQRGTGNNPDTLAEDYSIAQMAAELHQALVAAGIERYAVVGHALGALVGMQLALDYPASVTVLVSVNGWLRINAHTRRCFQVREQLLHSGGAQAWVEAQPLFLYPADWMAARAPRLEAEGALALAHFQGKNNLLRRLNALKRADFSRHADRIRCPVQIICASDDLLVPSACSSELHAALPDSQKMVMRYGGHACNVTDPETFNALLLNGLASLLHHREAAL.

It belongs to the AB hydrolase superfamily. Hydrolase RutD family.

The catalysed reaction is carbamate + 2 H(+) = NH4(+) + CO2. Functionally, involved in pyrimidine catabolism. May facilitate the hydrolysis of carbamate, a reaction that can also occur spontaneously. This Escherichia coli O6:H1 (strain CFT073 / ATCC 700928 / UPEC) protein is Putative carbamate hydrolase RutD.